A 132-amino-acid chain; its full sequence is Small ribosomal subunit protein uS8 (132 aa).

This sequence belongs to the universal ribosomal protein uS8 family. Part of the 30S ribosomal subunit. Contacts proteins S5 and S12.

In terms of biological role, one of the primary rRNA binding proteins, it binds directly to 16S rRNA central domain where it helps coordinate assembly of the platform of the 30S subunit. The chain is Small ribosomal subunit protein uS8 from Micrococcus luteus (strain ATCC 4698 / DSM 20030 / JCM 1464 / CCM 169 / CCUG 5858 / IAM 1056 / NBRC 3333 / NCIMB 9278 / NCTC 2665 / VKM Ac-2230) (Micrococcus lysodeikticus).